Reading from the N-terminus, the 880-residue chain is Alanine--tRNA ligase (880 aa).

Zn(2+) contacts are provided by His568, His572, Cys670, and His674.

This sequence belongs to the class-II aminoacyl-tRNA synthetase family. It depends on Zn(2+) as a cofactor.

Its subcellular location is the cytoplasm. It carries out the reaction tRNA(Ala) + L-alanine + ATP = L-alanyl-tRNA(Ala) + AMP + diphosphate. Functionally, catalyzes the attachment of alanine to tRNA(Ala) in a two-step reaction: alanine is first activated by ATP to form Ala-AMP and then transferred to the acceptor end of tRNA(Ala). Also edits incorrectly charged Ser-tRNA(Ala) and Gly-tRNA(Ala) via its editing domain. The chain is Alanine--tRNA ligase from Ligilactobacillus salivarius (strain UCC118) (Lactobacillus salivarius).